The primary structure comprises 274 residues: Large ribosomal subunit protein uL2 (274 aa).

Disordered regions lie at residues 28-54 and 224-274; these read APHAPLLEKKSKTGGRNNNGRITTRHI and VAMN…RRRK. A compositionally biased stretch (basic and acidic residues) spans 263–274; it reads KRTDKMIVRRRK.

This sequence belongs to the universal ribosomal protein uL2 family. As to quaternary structure, part of the 50S ribosomal subunit. Forms a bridge to the 30S subunit in the 70S ribosome.

Functionally, one of the primary rRNA binding proteins. Required for association of the 30S and 50S subunits to form the 70S ribosome, for tRNA binding and peptide bond formation. It has been suggested to have peptidyltransferase activity; this is somewhat controversial. Makes several contacts with the 16S rRNA in the 70S ribosome. The polypeptide is Large ribosomal subunit protein uL2 (Pseudomonas fluorescens (strain SBW25)).